We begin with the raw amino-acid sequence, 50 residues long: Conotoxin Bu13 (50 aa).

Residue Ala1 is a signal peptide. A propeptide spanning residues 2-24 (EDSRGTQLHRALRKTTKLSLSIR) is cleaved from the precursor. 3 disulfide bridges follow: Cys25/Cys40, Cys32/Cys44, and Cys39/Cys49.

This sequence belongs to the conotoxin O1 superfamily. Expressed by the venom duct.

The protein localises to the secreted. The protein is Conotoxin Bu13 of Conus bullatus (Bubble cone).